The sequence spans 269 residues: Hydroxyethylthiazole kinase (269 aa).

Met-46 is a binding site for substrate. ATP contacts are provided by Arg-122 and Thr-168. Gly-195 contributes to the substrate binding site.

The protein belongs to the Thz kinase family. The cofactor is Mg(2+).

The catalysed reaction is 5-(2-hydroxyethyl)-4-methylthiazole + ATP = 4-methyl-5-(2-phosphooxyethyl)-thiazole + ADP + H(+). It participates in cofactor biosynthesis; thiamine diphosphate biosynthesis; 4-methyl-5-(2-phosphoethyl)-thiazole from 5-(2-hydroxyethyl)-4-methylthiazole: step 1/1. Functionally, catalyzes the phosphorylation of the hydroxyl group of 4-methyl-5-beta-hydroxyethylthiazole (THZ). This is Hydroxyethylthiazole kinase from Geobacillus thermodenitrificans (strain NG80-2).